Here is a 502-residue protein sequence, read N- to C-terminus: Lysine--tRNA ligase (502 aa).

Positions 412 and 419 each coordinate Mg(2+).

This sequence belongs to the class-II aminoacyl-tRNA synthetase family. Homodimer. It depends on Mg(2+) as a cofactor.

The protein localises to the cytoplasm. The catalysed reaction is tRNA(Lys) + L-lysine + ATP = L-lysyl-tRNA(Lys) + AMP + diphosphate. This is Lysine--tRNA ligase from Buchnera aphidicola subsp. Cinara cedri (strain Cc).